A 706-amino-acid polypeptide reads, in one-letter code: Translation initiation factor IF-2 (706 aa).

Positions 55–81 (AKETANEKPAEQKKQSSNKINDRKKND) are enriched in basic and acidic residues. Positions 55-127 (AKETANEKPA…KPKKELPEKI (73 aa)) are disordered. A compositionally biased stretch (low complexity) spans 82–98 (VQNNQFNKNKKNNNQNK). In terms of domain architecture, tr-type G spans 207–376 (VRPPVVTIMG…LLVSEVGELK (170 aa)). A G1 region spans residues 216 to 223 (GHVDHGKT). 216–223 (GHVDHGKT) provides a ligand contact to GTP. Residues 241-245 (GITQH) are G2. Positions 262-265 (DTPG) are G3. GTP contacts are provided by residues 262 to 266 (DTPGH) and 316 to 319 (NKID). The interval 316 to 319 (NKID) is G4. The interval 352 to 354 (SAK) is G5.

Belongs to the TRAFAC class translation factor GTPase superfamily. Classic translation factor GTPase family. IF-2 subfamily.

The protein localises to the cytoplasm. Functionally, one of the essential components for the initiation of protein synthesis. Protects formylmethionyl-tRNA from spontaneous hydrolysis and promotes its binding to the 30S ribosomal subunits. Also involved in the hydrolysis of GTP during the formation of the 70S ribosomal complex. The protein is Translation initiation factor IF-2 of Bacillus pumilus (strain SAFR-032).